A 248-amino-acid polypeptide reads, in one-letter code: Protein maestro (248 aa).

Positions 1-21 are disordered; that stretch reads MDQRQRRILGQPLSIPTSQPK. An HEAT repeat occupies 128-163; that stretch reads SFFIDITLQTRTLLDDENDSLRYSAFVLFGQLAAFA.

Ubiquitous.

It localises to the nucleus. The protein resides in the nucleolus. This Homo sapiens (Human) protein is Protein maestro (MRO).